Consider the following 200-residue polypeptide: MLILFEPGVCQVDVATGRLKGATNRYVKTFRDLAGLYRDESAYQALIATRGDDVAYEVTDYKPSANGGDIIIGVTRMEPGKIGDEYFMTRGHIHARPNRPEMYYGEAGVGVMLLESPHGEIRTIEMRARTMCYVPPFWIHRSVNVGLEPLVMTFSYPADAGQDYDVIAKAGGMRTVLSMTGTVDGPQSITPVIQGDTHRL.

Residues histidine 92, histidine 94, glutamate 101, and histidine 140 each contribute to the Fe cation site.

This sequence belongs to the archaeal-type GPI family. In terms of assembly, homodimer. It depends on Fe cation as a cofactor.

It is found in the cytoplasm. The enzyme catalyses alpha-D-glucose 6-phosphate = beta-D-fructose 6-phosphate. The protein operates within carbohydrate degradation; glycolysis; D-glyceraldehyde 3-phosphate and glycerone phosphate from D-glucose: step 2/4. The chain is Putative glucose-6-phosphate isomerase 2 (pgiA2) from Rhizobium meliloti (strain 1021) (Ensifer meliloti).